Consider the following 740-residue polypeptide: Inhibitor of nuclear factor kappa-B kinase subunit alpha (740 aa).

The region spanning 15 to 302 (WEMRERLGTG…LTLKQPRCFV (288 aa)) is the Protein kinase domain. Residues 21 to 29 (LGTGGFGNV) and K44 each bind ATP. At T23 the chain carries Phosphothreonine; by PKB/AKT1. The active-site Proton acceptor is D144. Phosphoserine; by MAP3K14 is present on S176. S180 carries the phosphoserine modification. The tract at residues 455–476 (LLRYNTNLTKMKNTLISASQQL) is leucine-zipper. Positions 733-738 (LDWSWL) are NEMO-binding.

Belongs to the protein kinase superfamily. Ser/Thr protein kinase family. I-kappa-B kinase subfamily. In terms of assembly, component of the I-kappa-B-kinase (IKK) core complex consisting of CHUK, IKBKB and IKBKG; probably four alpha/CHUK-beta/IKBKB dimers are associated with four gamma/IKBKG subunits. The IKK core complex seems to associate with regulatory or adapter proteins to form a IKK-signalosome holo-complex. The IKK complex associates with TERF2IP/RAP1, leading to promote IKK-mediated phosphorylation of RELA/p65. Part of a complex composed of NCOA2, NCOA3, CHUK/IKKA, IKBKB, IKBKG and CREBBP. Part of a 70-90 kDa complex at least consisting of CHUK/IKKA, IKBKB, NFKBIA, RELA, ELP1 and MAP3K14. Directly interacts with TRPC4AP. May interact with TRAF2. Interacts with NALP2. May interact with MAVS/IPS1. Interacts with ARRB1 and ARRB2. Interacts with NLRC5; prevents CHUK phosphorylation and kinase activity. Interacts with PIAS1; this interaction induces PIAS1 phosphorylation. Interacts with ZNF268 isoform 2; the interaction is further increased in a TNF-alpha-dependent manner. Interacts with IFIT5; the interaction synergizes the recruitment of IKK to MAP3K7 and enhances IKK phosphorylation. Interacts with LRRC14. Directly interacts with DDX3X after the physiological activation of the TLR7 and TLR8 pathways; this interaction enhances CHUK autophosphorylation. Post-translationally, ubiquitinated by TRIM56 via 'Lys-63'-linked ubiquitination, promoting activation of CHUK/IKKA. Phosphorylated by MAP3K14/NIK, AKT and to a lesser extent by MEKK1, and dephosphorylated by PP2A. Autophosphorylated.

It is found in the cytoplasm. The protein resides in the nucleus. It catalyses the reaction L-seryl-[I-kappa-B protein] + ATP = O-phospho-L-seryl-[I-kappa-B protein] + ADP + H(+). With respect to regulation, activated when phosphorylated and inactivated when dephosphorylated. Its function is as follows. Serine kinase that plays an essential role in the NF-kappa-B signaling pathway which is activated by multiple stimuli such as inflammatory cytokines, bacterial or viral products, DNA damages or other cellular stresses. Acts as a part of the canonical IKK complex in the conventional pathway of NF-kappa-B activation and phosphorylates inhibitors of NF-kappa-B on serine residues. These modifications allow polyubiquitination of the inhibitors and subsequent degradation by the proteasome. In turn, free NF-kappa-B is translocated into the nucleus and activates the transcription of hundreds of genes involved in immune response, growth control, or protection against apoptosis. Negatively regulates the pathway by phosphorylating the scaffold protein TAXBP1 and thus promoting the assembly of the A20/TNFAIP3 ubiquitin-editing complex (composed of A20/TNFAIP3, TAX1BP1, and the E3 ligases ITCH and RNF11). Therefore, CHUK plays a key role in the negative feedback of NF-kappa-B canonical signaling to limit inflammatory gene activation. As part of the non-canonical pathway of NF-kappa-B activation, the MAP3K14-activated CHUK/IKKA homodimer phosphorylates NFKB2/p100 associated with RelB, inducing its proteolytic processing to NFKB2/p52 and the formation of NF-kappa-B RelB-p52 complexes. In turn, these complexes regulate genes encoding molecules involved in B-cell survival and lymphoid organogenesis. Also participates in the negative feedback of the non-canonical NF-kappa-B signaling pathway by phosphorylating and destabilizing MAP3K14/NIK. Within the nucleus, phosphorylates CREBBP and consequently increases both its transcriptional and histone acetyltransferase activities. Modulates chromatin accessibility at NF-kappa-B-responsive promoters by phosphorylating histones H3 at 'Ser-10' that are subsequently acetylated at 'Lys-14' by CREBBP. Additionally, phosphorylates the CREBBP-interacting protein NCOA3. Also phosphorylates FOXO3 and may regulate this pro-apoptotic transcription factor. Interacts with SASH1. Phosphorylates RIPK1 at 'Ser-25' which represses its kinase activity and consequently prevents TNF-mediated RIPK1-dependent cell death. Phosphorylates AMBRA1 following mitophagy induction, promoting AMBRA1 interaction with ATG8 family proteins and its mitophagic activity. The sequence is that of Inhibitor of nuclear factor kappa-B kinase subunit alpha (CHUK) from Bos taurus (Bovine).